Here is a 302-residue protein sequence, read N- to C-terminus: Putative T-box protein 34 (302 aa).

The segment at residues 5-180 (IVNEHKYREL…KMNLAPGSSQ (176 aa)) is a DNA-binding region (T-box).

It localises to the nucleus. The polypeptide is Putative T-box protein 34 (tbx-34) (Caenorhabditis elegans).